The primary structure comprises 306 residues: MPIKIPDDLPATSVLEAEGVMVMREADAVRQDIRPLRIGLLNLMPNKVTTETQIARLLGATPLQVELTLVRMTNHVARHTPADHMLSFYCPWEEVNDQRFDGFVITGAPVERLPFEEVTYWDEMRRVFDWTQSHVHRTLNICWAAQAAVYHFHGMKKYDLPAKASGVFRQRSLVPASPYLRGFSDDFAIPVSRWTEVRKSDIPADSGLKVLVDSTETGLCLLDDPRHRSLHMFNHVEYDTTSLADEYFRDIQVQPEAKVPVNYFPGDDAKRPPENRWRSHAHLLFGNWINEMYQSTPYDIERIGKV.

Residue C142 is the Acyl-thioester intermediate of the active site. K163 and S192 together coordinate substrate. H235 acts as the Proton acceptor in catalysis. E237 is an active-site residue. R249 contacts substrate.

Belongs to the MetA family.

The protein resides in the cytoplasm. The enzyme catalyses L-homoserine + acetyl-CoA = O-acetyl-L-homoserine + CoA. It participates in amino-acid biosynthesis; L-methionine biosynthesis via de novo pathway; O-acetyl-L-homoserine from L-homoserine: step 1/1. In terms of biological role, transfers an acetyl group from acetyl-CoA to L-homoserine, forming acetyl-L-homoserine. The chain is Homoserine O-acetyltransferase from Brucella abortus (strain S19).